The following is a 663-amino-acid chain: Pyoverdine export ATP-binding/permease protein PvdT (663 aa).

In terms of domain architecture, ABC transporter spans 11–250 (IELRDIRKRY…PSAGVERHLQ (240 aa)). 48-55 (GASGSGKS) serves as a coordination point for ATP. Helical transmembrane passes span 292–312 (ALTL…LAVG), 545–565 (IAAI…LMTV), 598–618 (VVGG…LLLG), and 626–646 (LSAI…FGFM).

This sequence belongs to the ABC transporter superfamily. Macrolide exporter (TC 3.A.1.122) family. As to quaternary structure, part of the tripartite efflux system PvdRT-OpmQ, which is composed of an inner membrane component with both ATPase and permease domains, PvdT, a periplasmic membrane fusion protein, PvdR, and an outer membrane component, OpmQ.

The protein resides in the cell inner membrane. Functionally, part of the tripartite efflux system PvdRT-OpmQ required for the secretion into the extracellular milieu of the siderophore pyoverdine (PVD), which is involved in iron acquisition. This subunit binds PVD and drives its secretion by hydrolyzing ATP. The system is responsible for export of newly synthesized PVD after the final steps of biosynthesis have taken place in the periplasm. It is also responsible for recycling of PVD after internalization of ferri-PVD into the periplasm by the outer-membrane receptor FpvA and release of iron from PVD, thus making PVD available for new cycles of iron uptake. In addition, can expel unwanted metals complexed with PVD from the periplasm into the extracellular medium. In Pseudomonas aeruginosa (strain ATCC 15692 / DSM 22644 / CIP 104116 / JCM 14847 / LMG 12228 / 1C / PRS 101 / PAO1), this protein is Pyoverdine export ATP-binding/permease protein PvdT.